Consider the following 495-residue polypeptide: B3 domain-containing protein Os01g0234100 (495 aa).

Disordered regions lie at residues methionine 1–glutamine 25 and proline 88–glutamate 108. Positions glutamine 92 to glutamate 108 are enriched in polar residues. A DNA-binding region (TF-B3) is located at residues phenylalanine 152 to lysine 243. A compositionally biased stretch (basic and acidic residues) spans glutamate 268–threonine 282. Positions glutamate 268 to valine 289 are disordered.

The protein localises to the nucleus. In Oryza sativa subsp. japonica (Rice), this protein is B3 domain-containing protein Os01g0234100.